The following is a 146-amino-acid chain: Large ribosomal subunit protein uL15 (146 aa).

The segment at 1–51 (MKLHELQPAPGSRKERNRVGRGIGSGNGKTSGKGHKGQNARSGGGVRIGFE) is disordered. Gly residues-rich tracts occupy residues 21 to 31 (RGIGSGNGKTS) and 42 to 51 (SGGGVRIGFE).

The protein belongs to the universal ribosomal protein uL15 family. As to quaternary structure, part of the 50S ribosomal subunit.

Its function is as follows. Binds to the 23S rRNA. In Anoxybacillus flavithermus (strain DSM 21510 / WK1), this protein is Large ribosomal subunit protein uL15.